A 382-amino-acid chain; its full sequence is Lipid-A-disaccharide synthase (382 aa).

It belongs to the LpxB family.

The enzyme catalyses a lipid X + a UDP-2-N,3-O-bis[(3R)-3-hydroxyacyl]-alpha-D-glucosamine = a lipid A disaccharide + UDP + H(+). Its pathway is bacterial outer membrane biogenesis; LPS lipid A biosynthesis. Condensation of UDP-2,3-diacylglucosamine and 2,3-diacylglucosamine-1-phosphate to form lipid A disaccharide, a precursor of lipid A, a phosphorylated glycolipid that anchors the lipopolysaccharide to the outer membrane of the cell. The protein is Lipid-A-disaccharide synthase of Alkalilimnicola ehrlichii (strain ATCC BAA-1101 / DSM 17681 / MLHE-1).